Consider the following 1892-residue polypeptide: Plexin A3 (1892 aa).

The first 20 residues, 1 to 20 (MRSLWLLVFSFSVLTGTNMA), serve as a signal peptide directing secretion. The 489-residue stretch at 21 to 509 (FPMILSERPE…SDKQVSRLPV (489 aa)) folds into the Sema domain. The Extracellular segment spans residues 21 to 1240 (FPMILSERPE…IYSDSTLTLP (1220 aa)). Asn-68 carries an N-linked (GlcNAc...) asparagine glycan. Cystine bridges form between Cys-86/Cys-95, Cys-121/Cys-129, Cys-283/Cys-404, Cys-299/Cys-355, Cys-373/Cys-392, Cys-512/Cys-529, Cys-518/Cys-560, Cys-521/Cys-538, and Cys-532/Cys-544. The N-linked (GlcNAc...) asparagine glycan is linked to Asn-569. A disulfide bridge connects residues Cys-595 and Cys-615. IPT/TIG domains are found at residues 861–955 (PRIT…YSFV), 957–1041 (PSFS…YIYT), 1044–1143 (PNIS…FTYY), and 1146–1232 (PTFE…LHIY). The N-linked (GlcNAc...) asparagine glycan is linked to Asn-1183. Residues 1241-1261 (AIIGIGAGGGVLLIAIIAVLI) traverse the membrane as a helical segment. Residues 1262–1315 (AYKRKTRDADRTLKRLQLQMDNLESRVALECKEAFAELQTDIQELTNDMDGVKI) are a coiled coil. The Cytoplasmic portion of the chain corresponds to 1262 to 1892 (AYKRKTRDAD…QAINLMSGSS (631 aa)).

This sequence belongs to the plexin family. As to expression, detected in primary motor neurons in the embryonic nervous system.

It is found in the cell membrane. Coreceptor for class 3 semaphorins. Necessary for signaling by class 3 semaphorins and subsequent remodeling of the cytoskeleton. Plays a role in axon guidance in the developing nervous system. Class 3 semaphorins bind to a complex composed of a neuropilin and a plexin. The plexin modulates the affinity of the complex for specific semaphorins, and its cytoplasmic domain is required for the activation of down-stream signaling events in the cytoplasm. This chain is Plexin A3 (plxna3), found in Danio rerio (Zebrafish).